We begin with the raw amino-acid sequence, 1230 residues long: ATP-dependent helicase/nuclease subunit A (1230 aa).

Residues 4–480 enclose the UvrD-like helicase ATP-binding domain; that stretch reads RNWTGPQEAA…IDLSHNFRSR (477 aa). Residue 25–32 coordinates ATP; the sequence is AGAGSGKT. The UvrD-like helicase C-terminal domain maps to 517 to 799; the sequence is AQLEGSGPPV…RIMSIHQAKG (283 aa). The disordered stretch occupies residues 535–554; sequence TSVGRDTAGTADDEPDRSDE. Residues 545–554 are compositionally biased toward acidic residues; the sequence is ADDEPDRSDE.

Belongs to the helicase family. AddA subfamily. As to quaternary structure, heterodimer of AddA and AddB/RexB. It depends on Mg(2+) as a cofactor.

The catalysed reaction is Couples ATP hydrolysis with the unwinding of duplex DNA by translocating in the 3'-5' direction.. It carries out the reaction ATP + H2O = ADP + phosphate + H(+). In terms of biological role, the heterodimer acts as both an ATP-dependent DNA helicase and an ATP-dependent, dual-direction single-stranded exonuclease. Recognizes the chi site generating a DNA molecule suitable for the initiation of homologous recombination. The AddA nuclease domain is required for chi fragment generation; this subunit has the helicase and 3' -&gt; 5' nuclease activities. In Desulforudis audaxviator (strain MP104C), this protein is ATP-dependent helicase/nuclease subunit A.